Consider the following 537-residue polypeptide: [Pyruvate dehydrogenase [acetyl-transferring]]-phosphatase 1, mitochondrial (537 aa).

The transit peptide at 1–71 (MPAPTQLFFP…WWHYTQGRRY (71 aa)) directs the protein to the mitochondrion. One can recognise a PPM-type phosphatase domain in the interval 109–525 (ILGFDSNQLP…DDITIIVVQF (417 aa)). Residues D144 and G145 each coordinate Mn(2+). At K202 the chain carries N6-acetyllysine. Residues D418 and D516 each contribute to the Mn(2+) site.

It belongs to the PP2C family. As to quaternary structure, heterodimer of a catalytic (PDP1) and a regulatory (PDPR) subunit. Mn(2+) is required as a cofactor. The cofactor is Mg(2+).

The protein localises to the mitochondrion. The enzyme catalyses O-phospho-L-seryl-[pyruvate dehydrogenase E1 alpha subunit] + H2O = L-seryl-[pyruvate dehydrogenase E1 alpha subunit] + phosphate. With respect to regulation, magnesium-dependent and calcium-stimulated. PDP1 activity strongly depends on its Ca(2+)-dependent binding to the lipoyl domain of E2 subunit of component of the pyruvate dehydrogenase complex. In terms of biological role, mitochondrial enzyme that catalyzes the dephosphorylation and concomitant reactivation of the alpha subunit of the E1 component of the pyruvate dehydrogenase complex (PDC), thereby stimulating the conversion of pyruvate into acetyl-CoA. This Pongo abelii (Sumatran orangutan) protein is [Pyruvate dehydrogenase [acetyl-transferring]]-phosphatase 1, mitochondrial (PDP1).